The following is a 494-amino-acid chain: MKNDSRTFGASTVLTKTQNIGRISQIIGPVLDVTFPPGKMPNIYNSLIVKGQNTAGQEINVTCEVQQLLGNNKVRAVAMSATDGLMRGMDVVDTGAALSVPVGEATLGRIFNVLGEPVDNLGPVDASTTFPIHRSAPAFTQLDTKLSIFETGIKVVDLLAPYRRGGKIGLFGGAGVGKTVLIMELINNIAKAHGGVSVFGGVGERTREGNDLYMEMKESKVINEENISESKVALVYGQMNEPPGARMRVGLTALTMAEYFRDVNKQDVLLFIDNIFRFVQAGSEVSALLGRMPSAVGYQPTLSTEMGTLQERITSTKEGSITSIQAVYVPADDLTDPAPATTFAHLDATTVLSRGLAAKGIYPAVDPLDSTSTMLQPWIVGEEHYETAQGVKETLQRYKELQDIIAILGLDELSEEDRLVVARARKIERFLSQPFFVAEVSTGSPGKYVSLAETIKGFQMILSGELDSFPEQAFYLVGNIDEATAKAANLQMEN.

172–179 (GGAGVGKT) is a binding site for ATP.

This sequence belongs to the ATPase alpha/beta chains family. F-type ATPases have 2 components, CF(1) - the catalytic core - and CF(0) - the membrane proton channel. CF(1) has five subunits: alpha(3), beta(3), gamma(1), delta(1), epsilon(1). CF(0) has four main subunits: a(1), b(1), b'(1) and c(9-12).

The protein localises to the plastid. It is found in the chloroplast thylakoid membrane. The catalysed reaction is ATP + H2O + 4 H(+)(in) = ADP + phosphate + 5 H(+)(out). In terms of biological role, produces ATP from ADP in the presence of a proton gradient across the membrane. The catalytic sites are hosted primarily by the beta subunits. The sequence is that of ATP synthase subunit beta, chloroplastic from Physcomitrium patens (Spreading-leaved earth moss).